The following is a 333-amino-acid chain: Ribosomal protein L11 methyltransferase (333 aa).

S-adenosyl-L-methionine is bound by residues Thr-181, Gly-202, Asp-224, and Asn-268.

Belongs to the methyltransferase superfamily. PrmA family.

Its subcellular location is the cytoplasm. The catalysed reaction is L-lysyl-[protein] + 3 S-adenosyl-L-methionine = N(6),N(6),N(6)-trimethyl-L-lysyl-[protein] + 3 S-adenosyl-L-homocysteine + 3 H(+). Its function is as follows. Methylates ribosomal protein L11. In Helicobacter pylori (strain ATCC 700392 / 26695) (Campylobacter pylori), this protein is Ribosomal protein L11 methyltransferase.